The following is a 171-amino-acid chain: MTVTTIHEQLLEIITPVIRSFDLELWGMDFIQGGKAVLRIYIDGPDGVTIDQCATVSRHIGLALEVEDIIAGAYNLEVSSPGLERPLFSAAQLAAYKGHKAELVLRAPCAQFPGRKKFTGVVGNVEGENFTLQIDPLKGGDNLQEELSAHWDDVKKARLIYDFDSEKGQKR.

The protein belongs to the RimP family.

The protein localises to the cytoplasm. Functionally, required for maturation of 30S ribosomal subunits. In Oleidesulfovibrio alaskensis (strain ATCC BAA-1058 / DSM 17464 / G20) (Desulfovibrio alaskensis), this protein is Ribosome maturation factor RimP.